The chain runs to 66 residues: Large ribosomal subunit protein eL24 (66 aa).

C7, C10, C33, and C37 together coordinate Zn(2+). Residues 7–37 form a C4-type zinc finger; that stretch reads CSYCGKPFEPGTGKMYVRNDGRVLFFCSRKC.

The protein belongs to the eukaryotic ribosomal protein eL24 family. As to quaternary structure, part of the 50S ribosomal subunit. Forms a cluster with proteins L3 and L14. Zn(2+) is required as a cofactor.

Binds to the 23S rRNA. In Pyrococcus furiosus (strain ATCC 43587 / DSM 3638 / JCM 8422 / Vc1), this protein is Large ribosomal subunit protein eL24.